A 271-amino-acid polypeptide reads, in one-letter code: MEDTGSIKQEAQSHPPGIFEIPGEPAVVINGVPDEPQTDCMIAKDEPISSGTVGSGEWLEGREVRKFFLGRYYSGTVTKFDKQSGWYRVEYEDGDSEDLDWSELEEVLLPLDTKNSNTNAQSEYGEAGQRVNVKAPYPGHKPEKLVTTTVKAPYPGHKPEKLIPLVDDILTVGPEITSEEVGRAQGIFASADQNNFGLLMAFNFVFTKGEFSGSTVSMYGRNPIFSKVREMPIIGGTGAFRFGRGYAQAKTFTFNTTSGNAVVKYNVYIWH.

Positions 1–12 are enriched in polar residues; the sequence is MEDTGSIKQEAQ. Positions 1–22 are disordered; the sequence is MEDTGSIKQEAQSHPPGIFEIP. N-linked (GlcNAc...) asparagine glycosylation is present at asparagine 255.

It belongs to the plant dirigent protein family. As to quaternary structure, homodimer.

The protein resides in the secreted. It localises to the extracellular space. Its subcellular location is the apoplast. Functionally, dirigent proteins impart stereoselectivity on the phenoxy radical-coupling reaction, yielding optically active lignans from two molecules of coniferyl alcohol in the biosynthesis of lignans, flavonolignans, and alkaloids and thus plays a central role in plant secondary metabolism. This is Dirigent protein 17 (DIR17) from Arabidopsis thaliana (Mouse-ear cress).